The following is a 445-amino-acid chain: MHGSPPAQALNQAVPDPSPELLARASSLRRHAIDLAQCSDQQRQEALRAMADALEQQREAILLANQDDLQAAEQEQLAPALLSRLKLDRTKLDGAIAGIRQLAQLPDPLAQRQLHRALDEGLVLERISVPLGVVGVIFEARPDAVMQIAALAIRSGNGAILKGGREANRSCSAILAALQQGLARSAVHPDVLTLLTSREESLALLKLDGLVDLIIPRGSNALVQFIQDNTRIPVLGHADGICHLYVDRQVDLDQAVAVAVDSKAQYPAACNAIETLLLHKEIAPAFLAAALPAFAQAGVELRGDGAAMALGVSQSASDDDWATEYLDLVLSIRVVDSMDEALEHIARYSSRHTEVICTTNTETAERFLARVDSAGVYQNCSSRFADGFRYGFGAEVGISTQTLPPRGPVGLEGLVTYRYRLRGDGHIAADYASGARQFTHQNLPL.

This sequence belongs to the gamma-glutamyl phosphate reductase family.

Its subcellular location is the cytoplasm. The enzyme catalyses L-glutamate 5-semialdehyde + phosphate + NADP(+) = L-glutamyl 5-phosphate + NADPH + H(+). It functions in the pathway amino-acid biosynthesis; L-proline biosynthesis; L-glutamate 5-semialdehyde from L-glutamate: step 2/2. Functionally, catalyzes the NADPH-dependent reduction of L-glutamate 5-phosphate into L-glutamate 5-semialdehyde and phosphate. The product spontaneously undergoes cyclization to form 1-pyrroline-5-carboxylate. In Synechococcus sp. (strain RCC307), this protein is Gamma-glutamyl phosphate reductase.